The sequence spans 169 residues: Methane monooxygenase component A gamma chain (169 aa).

As to quaternary structure, m.trichosporium has two forms of methane monooxygenase, a soluble and a membrane-bound type. The soluble type consists of four components (A to D): protein A, comprising three chains, in an alpha-2, beta-2, gamma-2 configuration, is a nonheme iron protein containing an unusual mu-hydroxo bridge structure at its active site and interacts with both oxygen and methane.

The catalysed reaction is methane + NADH + O2 + H(+) = methanol + NAD(+) + H2O. It catalyses the reaction methane + NADPH + O2 + H(+) = methanol + NADP(+) + H2O. Responsible for the initial oxygenation of methane to methanol in methanotrophs. It also catalyzes the monohydroxylation of a variety of unactivated alkenes, alicyclic, aromatic and heterocyclic compounds. In Methylosinus trichosporium, this protein is Methane monooxygenase component A gamma chain (mmoZ).